A 121-amino-acid polypeptide reads, in one-letter code: MKYFKRLSDRERAIFEAGITLGAIYHQFCGTPVSPGTAEEVAKCIERAALLQPCVIDARVEVDVSSEDTDNYGGYTEVSGRNLRVTIVTRCGEWEAVGKLEFIEELNYPLMWVEEIRRVEQ.

2 residues coordinate substrate: glutamate 16 and methionine 111.

Belongs to the archaeal dihydroneopterin aldolase family. As to quaternary structure, homotetramer.

It catalyses the reaction 7,8-dihydroneopterin = 6-hydroxymethyl-7,8-dihydropterin + glycolaldehyde. Its pathway is cofactor biosynthesis; 5,6,7,8-tetrahydromethanopterin biosynthesis. In terms of biological role, catalyzes the conversion of 7,8-dihydroneopterin (H2Neo) to 6-hydroxymethyl-7,8-dihydropterin (6-HMD). The protein is Dihydroneopterin aldolase of Methanopyrus kandleri (strain AV19 / DSM 6324 / JCM 9639 / NBRC 100938).